A 353-amino-acid polypeptide reads, in one-letter code: 2-Hydroxyacid oxidase 2 (353 aa).

An FMN hydroxy acid dehydrogenase domain is found at 2–353; that stretch reads PLVCLADFKA…SPDLIQFSRL (352 aa). Residues 77 to 79, S106, and Q128 contribute to the FMN site; that span reads PTA. Y130 lines the a 2-oxocarboxylate pocket. S133 bears the Phosphoserine mark. T156 lines the FMN pocket. R165 is a binding site for a 2-oxocarboxylate. Residue K224 coordinates FMN. H248 functions as the Proton acceptor in the catalytic mechanism. R251 lines the a 2-oxocarboxylate pocket. FMN-binding positions include 279–283 and 302–303; these read DGGVR and GR. Residues 351–353 carry the Microbody targeting signal motif; that stretch reads SRL.

Belongs to the FMN-dependent alpha-hydroxy acid dehydrogenase family. Homotetramer. Could also form homooctamer. It depends on FMN as a cofactor. Expressed in kidney.

It is found in the peroxisome. The enzyme catalyses a (2S)-2-hydroxycarboxylate + O2 = a 2-oxocarboxylate + H2O2. It carries out the reaction 2-hydroxyoctanoate + O2 = 2-oxooctanoate + H2O2. It catalyses the reaction 2-hydroxyhexadecanoate + O2 = 2-oxohexadecanoate + H2O2. The catalysed reaction is 2-hydroxyhexanoate + O2 = 2-oxohexanoate + H2O2. The enzyme catalyses mandelate + O2 = phenylglyoxylate + H2O2. With respect to regulation, is inhibited in vitro by CCPST (4-carboxy-5-(4-chlorophenyl)sulfanyl-1,2,3-thiadiazole). Functionally, oxidase that catalyzes the oxidation of medium and long chain hydroxyacids such as 2-hydroxyhexadecanoate, 2-hydroxyoctanoate, 2-hydroxyhexanoate and 2-hydroxybutanoate, to the correspondong 2-oxoacids. Its role in the oxidation of 2-hydroxy fatty acids may contribute to the general pathway of fatty acid alpha-oxidation. Can also use mandelate as substrate. Active in vitro with the artificial electron acceptor 2,6-dichlorophenolindophenol (DCIP), but O2 is believed to be the physiological electron acceptor, leading to the production of H2O2. This is 2-Hydroxyacid oxidase 2 (Hao2) from Rattus norvegicus (Rat).